Here is a 228-residue protein sequence, read N- to C-terminus: UPF0758 protein NT01CX_1687 (228 aa).

One can recognise an MPN domain in the interval 106 to 228; it reads IIKSPGDVAG…YISLKEKNIL (123 aa). Positions 177, 179, and 190 each coordinate Zn(2+). Residues 177-190 carry the JAMM motif motif; it reads HNHPSGDPTPSSED.

Belongs to the UPF0758 family.

The protein is UPF0758 protein NT01CX_1687 of Clostridium novyi (strain NT).